Reading from the N-terminus, the 130-residue chain is Large ribosomal subunit protein bL12c (130 aa).

It belongs to the bacterial ribosomal protein bL12 family. Homodimer. Part of the ribosomal stalk of the 50S ribosomal subunit. Forms a multimeric L10(L12)X complex, where L10 forms an elongated spine to which 2 to 4 L12 dimers bind in a sequential fashion. Binds GTP-bound translation factors.

It is found in the plastid. Its function is as follows. Forms part of the ribosomal stalk which helps the ribosome interact with GTP-bound translation factors. Is thus essential for accurate translation. This Prototheca wickerhamii protein is Large ribosomal subunit protein bL12c.